The chain runs to 601 residues: Proteasome-associated ATPase (601 aa).

Residues 1–15 are compositionally biased toward gly residues; sequence MSGPRSGSGSGGSTG. The segment at 1–29 is disordered; it reads MSGPRSGSGSGGSTGRPGDADSQRSAYEK. Positions 18–29 are enriched in basic and acidic residues; sequence GDADSQRSAYEK. The stretch at 19-106 forms a coiled coil; the sequence is DADSQRSAYE…LKEEVDRLAQ (88 aa). 289-294 serves as a coordination point for ATP; the sequence is GCGKTL. Residues 600 to 601 are docks into pockets in the proteasome alpha-ring; it reads YL.

This sequence belongs to the AAA ATPase family. As to quaternary structure, homohexamer. Assembles into a hexameric ring structure that caps the 20S proteasome core. Strongly interacts with the prokaryotic ubiquitin-like protein Pup through a hydrophobic interface; the interacting region of ARC lies in its N-terminal coiled-coil domain. There is one Pup binding site per ARC hexamer ring. Upon ATP-binding, the C-terminus of ARC interacts with the alpha-rings of the proteasome core, possibly by binding to the intersubunit pockets.

Its pathway is protein degradation; proteasomal Pup-dependent pathway. Functionally, ATPase which is responsible for recognizing, binding, unfolding and translocation of pupylated proteins into the bacterial 20S proteasome core particle. May be essential for opening the gate of the 20S proteasome via an interaction with its C-terminus, thereby allowing substrate entry and access to the site of proteolysis. Thus, the C-termini of the proteasomal ATPase may function like a 'key in a lock' to induce gate opening and therefore regulate proteolysis. The chain is Proteasome-associated ATPase from Parafrankia sp. (strain EAN1pec).